The chain runs to 706 residues: Paxillin-like protein 1 (706 aa).

Disordered stretches follow at residues 24-192 (ERAG…EQDL), 222-258 (VLDQ…LNFE), 279-341 (AKQE…TKVE), and 514-537 (IDNS…SSDA). Residues 35–64 (PFSSQRNASTGSLQASVKSPPITRQRNVSA) show a composition bias toward polar residues. Serine 43 and serine 63 each carry phosphoserine. Composition is skewed to low complexity over residues 73 to 86 (KSAY…AYSS) and 117 to 129 (SSRP…SISR). Basic and acidic residues-rich tracts occupy residues 130–150 (PSER…DRQA) and 222–236 (VLDQ…KEES). Over residues 237–252 (SIEYESEGQQEDENDI) the composition is skewed to acidic residues. Over residues 279-290 (AKQEEKNTEPKI) the composition is skewed to basic and acidic residues. Polar residues predominate over residues 296–308 (TRESNTPSLTMNA). LIM zinc-binding domains are found at residues 556–612 (CRAC…CQKH) and 621–672 (CKVC…CGNH).

The polypeptide is Paxillin-like protein 1 (PXL1) (Saccharomyces cerevisiae (strain ATCC 204508 / S288c) (Baker's yeast)).